The sequence spans 629 residues: tRNA uridine 5-carboxymethylaminomethyl modification enzyme MnmG (629 aa).

Residue 13–18 (GGGHAG) participates in FAD binding. 273 to 287 (GPRYCPSIEDKVNRF) serves as a coordination point for NAD(+).

It belongs to the MnmG family. As to quaternary structure, homodimer. Heterotetramer of two MnmE and two MnmG subunits. The cofactor is FAD.

The protein resides in the cytoplasm. Its function is as follows. NAD-binding protein involved in the addition of a carboxymethylaminomethyl (cmnm) group at the wobble position (U34) of certain tRNAs, forming tRNA-cmnm(5)s(2)U34. This is tRNA uridine 5-carboxymethylaminomethyl modification enzyme MnmG from Hahella chejuensis (strain KCTC 2396).